Consider the following 260-residue polypeptide: Proansamycin X synthase (260 aa).

Cys-73 serves as the catalytic Acyl-thioester intermediate. Active-site residues include His-111 and Asp-126.

This sequence belongs to the arylamine N-acetyltransferase family.

It functions in the pathway antibiotic biosynthesis; rifamycin B biosynthesis. Functionally, catalyzes the release of the completed linear polyketide from the rif PKS by forming an intramolecular amide bond, in this way terminating polyketide assembly and forming the macrocyclic compound proansamycin X, an intermediate in the rifamycin B biosynthesis. The sequence is that of Proansamycin X synthase (rifF) from Amycolatopsis mediterranei (strain S699) (Nocardia mediterranei).